The sequence spans 578 residues: Proline--tRNA ligase (578 aa).

Belongs to the class-II aminoacyl-tRNA synthetase family. ProS type 1 subfamily. Homodimer.

Its subcellular location is the cytoplasm. It carries out the reaction tRNA(Pro) + L-proline + ATP = L-prolyl-tRNA(Pro) + AMP + diphosphate. In terms of biological role, catalyzes the attachment of proline to tRNA(Pro) in a two-step reaction: proline is first activated by ATP to form Pro-AMP and then transferred to the acceptor end of tRNA(Pro). As ProRS can inadvertently accommodate and process non-cognate amino acids such as alanine and cysteine, to avoid such errors it has two additional distinct editing activities against alanine. One activity is designated as 'pretransfer' editing and involves the tRNA(Pro)-independent hydrolysis of activated Ala-AMP. The other activity is designated 'posttransfer' editing and involves deacylation of mischarged Ala-tRNA(Pro). The misacylated Cys-tRNA(Pro) is not edited by ProRS. This chain is Proline--tRNA ligase, found in Burkholderia pseudomallei (strain 668).